The primary structure comprises 42 residues: Delta-actitoxin-Ael2d (42 aa).

Cystine bridges form between cysteine 4/cysteine 37, cysteine 6/cysteine 30, and cysteine 20/cysteine 38.

The protein belongs to the sea anemone type 3 (BDS) potassium channel toxin family.

The protein resides in the secreted. It localises to the nematocyst. Its function is as follows. Binds to voltage-gated sodium channels (Nav), and slows down the inactivation of mammalian Nav1.2/SCN2A, Nav1.3/SCN3A Nav1.4/SCN4A, Nav1.6/SCN8A, insect DmNav1 and BgNav1 channels, and arachnid VdNav1 channel. This toxin acts by binding to site 3 of sodium channels. This chain is Delta-actitoxin-Ael2d, found in Anthopleura elegantissima (Green aggregating anemone).